A 102-amino-acid polypeptide reads, in one-letter code: Cysteine-rich venom protein VAR9 (102 aa).

An N-terminal signal peptide occupies residues Met1–Gly19. Positions Asn41–Lys80 constitute an SCP domain.

The protein belongs to the CRISP family. Post-translationally, contains 8 disulfide bonds. In terms of tissue distribution, expressed by the venom gland.

The protein resides in the secreted. Its function is as follows. Blocks ryanodine receptors, and potassium channels. The polypeptide is Cysteine-rich venom protein VAR9 (Varanus varius (Lace monitor lizard)).